The following is a 766-amino-acid chain: Nitrogen permease regulator 3 (766 aa).

The N-terminal stretch at 1-23 is a signal peptide; the sequence is MSSVVRPPDPCLVAIILITCSRA. Disordered regions lie at residues 33-140, 186-257, and 594-638; these read PNPS…WDSF, RKKR…VTDG, and EEAK…NATP. The segment covering 36–49 has biased composition (polar residues); the sequence is SIASAPSRSNSRTK. The segment covering 51–61 has biased composition (low complexity); it reads SPRASDSSPSS. The segment covering 62 to 74 has biased composition (acidic residues); the sequence is DNEEGSSSDEDDL. Residues 89–110 show a composition bias toward polar residues; the sequence is RRLSSGSPSTKAASQQRKSNLG. Basic and acidic residues-rich tracts occupy residues 118 to 133 and 217 to 250; these read ETPR…HELE and GGEK…HPDE.

Belongs to the NPR3 family.

Its function is as follows. Mediates inactivation of the TORC1 complex in response to amino acid starvation. Required for meiotic nuclear division. This chain is Nitrogen permease regulator 3 (NPR3), found in Coccidioides immitis (strain RS) (Valley fever fungus).